We begin with the raw amino-acid sequence, 199 residues long: Chaperone protein TorD (199 aa).

Belongs to the TorD/DmsD family. TorD subfamily.

Its subcellular location is the cytoplasm. Functionally, involved in the biogenesis of TorA. Acts on TorA before the insertion of the molybdenum cofactor and, as a result, probably favors a conformation of the apoenzyme that is competent for acquiring the cofactor. This Shigella boydii serotype 18 (strain CDC 3083-94 / BS512) protein is Chaperone protein TorD.